A 966-amino-acid polypeptide reads, in one-letter code: Muscular LMNA-interacting protein (966 aa).

Phosphoserine is present on S129. Disordered regions lie at residues 132–154, 182–207, 303–337, 354–388, 434–562, 597–684, 785–837, and 929–966; these read EDEATCRQGEQGPPGATGNIATR, SHPEIPHGIAPQQKHGQLTSPTTSEQ, LAPEAQKKVSTSSALNPREDVRTSPSPASGASLRS, PSPKPLTSSSHGSLSTVCSQTSSSGNLSKSGLKSP, IKQT…TRPS, KRTC…TPSL, SMHS…SQLT, and SLRDEQEKSPTLLSQDTYNKPGHPMVTIPEHDTLDSKE. A required for interaction with ISL1 region spans residues 144 to 810; sequence PPGATGNIAT…GSETIKTPTT (667 aa). Composition is skewed to polar residues over residues 195-207 and 325-337; these read KHGQLTSPTTSEQ and TSPSPASGASLRS. Low complexity-rich tracts occupy residues 354–387, 437–455, and 478–497; these read PSPKPLTSSSHGSLSTVCSQTSSSGNLSKSGLKS, TPSTPKKSLSSCSLTTGST, and PLSQAQPPSPPALASSSYAA. S486 is subject to Phosphoserine. Positions 507–521 are enriched in polar residues; sequence TLRSSTTPPQSQTDL. 2 stretches are compositionally biased toward basic and acidic residues: residues 542-555 and 597-607; these read GRKDGDLRAPEKNR and KRTCSQRHSDQ. 2 stretches are compositionally biased toward polar residues: residues 639–649 and 657–684; these read SSLTQALQRSP and GSATCPSRTGMPDSTASNRSSRVSTPSL. The segment covering 785–797 has biased composition (low complexity); that stretch reads SMHSSDSPSRPSQ. S791 is subject to Phosphoserine. The segment covering 798–810 has biased composition (polar residues); it reads TMLGSETIKTPTT. Low complexity predominate over residues 825 to 834; it reads SSSSSTTSES. Positions 937–946 are enriched in polar residues; the sequence is SPTLLSQDTY. Residues 957–966 are compositionally biased toward basic and acidic residues; that stretch reads PEHDTLDSKE.

As to quaternary structure, directly interacts with LMNA. Interacts with ISL1 (via N-terminal domain); the interaction represses ISL1 transactivator activity. Interactions of ISL1 with MLIP1 and GCN5/KAT2A may be mutually exclusive. In terms of tissue distribution, expressed in cardiomyoctes. Expression is highly reduced in hypertrophic cardiomyocytes.

It localises to the nucleus. Its subcellular location is the nucleus envelope. The protein localises to the PML body. It is found in the cytoplasm. The protein resides in the cytosol. It localises to the cell membrane. Its subcellular location is the sarcolemma. Functionally, required for myoblast differentiation into myotubes, possibly acting as a transcriptional regulator of the myogenic program. Required for cardiac adaptation to stress through integrated regulation of the AKT/mTOR pathways and FOXO1. Regulates cardiac homeostasis and plays a role in the protection against cardiac hypertrophy. Binds chromatin. May act as a transcriptional cofactor for ISL1, repressing its transcriptional activity. May also repress MYOCD transcriptional activity. This Rattus norvegicus (Rat) protein is Muscular LMNA-interacting protein.